Consider the following 357-residue polypeptide: LINE-1 retrotransposable element ORF1 protein (357 aa).

Positions 1-40 (MAKGKRKNPTNRNQDHSPSSERSTPTPPSPGHPNTTENLD) are disordered. A coiled-coil region spans residues 59–156 (HKSLKDLQES…IENIDTTVKE (98 aa)). An RNA recognition motif (RRM) domain region spans residues 179 to 274 (NLRIIGIDEN…KGRPIRITPD (96 aa)). The C-terminal domain (CTD) stretch occupies residues 278-339 (ETMKARRAWT…STNPALQRII (62 aa)).

Belongs to the transposase 22 family. As to quaternary structure, homotrimer (via coiled coil domain). May also form larger homooligomers. Interacts with Tex19.1 and UBR2. Interacts with MOV10. Polyubiquitinated, probably by UBR2, which induces its degradation. In terms of tissue distribution, expressed in meiotic spermatocytes and in the cerebellum (at protein level).

Its subcellular location is the nucleus. The protein localises to the nucleolus. It localises to the cytoplasm. The protein resides in the cytoplasmic ribonucleoprotein granule. It is found in the stress granule. In terms of biological role, nucleic acid-binding protein which is essential for retrotransposition of LINE-1 elements in the genome. Functions as a nucleic acid chaperone binding its own transcript and therefore preferentially mobilizing the transcript from which they are encoded. The sequence is that of LINE-1 retrotransposable element ORF1 protein from Mus musculus (Mouse).